The primary structure comprises 150 residues: uncharacterized protein (150 aa).

The first 22 residues, 1-22 (MVIALKRFSFLASIATLTVLNA), serve as a signal peptide directing secretion. Cysteine 23 is lipidated: N-palmitoyl cysteine. A lipid anchor (S-diacylglycerol cysteine) is attached at cysteine 23.

This sequence belongs to the MG067/MG068/MG395 family.

The protein localises to the cell membrane. This is an uncharacterized protein from Mycoplasma pneumoniae (strain ATCC 29342 / M129 / Subtype 1) (Mycoplasmoides pneumoniae).